Consider the following 353-residue polypeptide: tRNA-specific 2-thiouridylase MnmA (353 aa).

Residues 6-13 and Leu32 contribute to the ATP site; that span reads GMSGGVDS. The Nucleophile role is filled by Cys99. A disulfide bridge connects residues Cys99 and Cys197. ATP is bound at residue Gly124. The tract at residues 147–149 is interaction with tRNA; that stretch reads KDQ. The active-site Cysteine persulfide intermediate is the Cys197. The tract at residues 303-304 is interaction with tRNA; the sequence is RY.

The protein belongs to the MnmA/TRMU family.

The protein resides in the cytoplasm. The catalysed reaction is S-sulfanyl-L-cysteinyl-[protein] + uridine(34) in tRNA + AH2 + ATP = 2-thiouridine(34) in tRNA + L-cysteinyl-[protein] + A + AMP + diphosphate + H(+). Catalyzes the 2-thiolation of uridine at the wobble position (U34) of tRNA, leading to the formation of s(2)U34. In Persephonella marina (strain DSM 14350 / EX-H1), this protein is tRNA-specific 2-thiouridylase MnmA.